The chain runs to 337 residues: GTP 3',8-cyclase (337 aa).

A Radical SAM core domain is found at 17–243; that stretch reads PFQRQYYYLR…HKSHTDGPAK (227 aa). Arg26 contacts GTP. [4Fe-4S] cluster contacts are provided by Cys33 and Cys37. Tyr39 serves as a coordination point for S-adenosyl-L-methionine. Cys40 contributes to the [4Fe-4S] cluster binding site. Arg76 lines the GTP pocket. Gly80 contacts S-adenosyl-L-methionine. Thr107 contacts GTP. An S-adenosyl-L-methionine-binding site is contributed by Ser131. Residue Lys168 participates in GTP binding. An S-adenosyl-L-methionine-binding site is contributed by Met202. Residues Cys265 and Cys268 each contribute to the [4Fe-4S] cluster site. A GTP-binding site is contributed by 270–272; it reads RLR. Position 282 (Cys282) interacts with [4Fe-4S] cluster.

This sequence belongs to the radical SAM superfamily. MoaA family. In terms of assembly, monomer and homodimer. The cofactor is [4Fe-4S] cluster.

It catalyses the reaction GTP + AH2 + S-adenosyl-L-methionine = (8S)-3',8-cyclo-7,8-dihydroguanosine 5'-triphosphate + 5'-deoxyadenosine + L-methionine + A + H(+). It participates in cofactor biosynthesis; molybdopterin biosynthesis. In terms of biological role, catalyzes the cyclization of GTP to (8S)-3',8-cyclo-7,8-dihydroguanosine 5'-triphosphate. The chain is GTP 3',8-cyclase from Haemophilus influenzae (strain 86-028NP).